A 948-amino-acid chain; its full sequence is Sensor histidine kinase RcsC (948 aa).

At 1-20 (MKYLASFRTTLKVSRYLFRA) the chain is on the cytoplasmic side. The helical transmembrane segment at 21-41 (LALLIWLLIAFVSVFYIVNAL) threads the bilayer. Over 42 to 313 (HQRESEIRQE…PVDLVLERIR (272 aa)) the chain is Periplasmic. A helical membrane pass occupies residues 314–334 (ILILNAILLNVLVGAGLFTLA). Residues 335–948 (RMYERRIFIP…YAERVRKTRA (614 aa)) are Cytoplasmic-facing. The region spanning 357-425 (QFNRKIVASA…VLTSNNTNLQ (69 aa)) is the PAS domain. The region spanning 476-692 (TVSHELRTPL…QFTLRIPLYG (217 aa)) is the Histidine kinase domain. The residue at position 479 (His479) is a Phosphohistidine; by autocatalysis. Residues 705 to 805 (AGTCCWLAVR…ARIYSIELDS (101 aa)) enclose the ABL domain. The Response regulatory domain occupies 826-940 (MILVVDDHPI…VLKQTLAVYA (115 aa)). Residue Asp875 is modified to 4-aspartylphosphate.

Belongs to the RcsC family. In terms of assembly, interacts with RcsD. Post-translationally, autophosphorylated. Activation probably requires a transfer of a phosphate group from a His in the transmitter domain to an Asp in the receiver domain.

The protein localises to the cell inner membrane. The enzyme catalyses ATP + protein L-histidine = ADP + protein N-phospho-L-histidine.. Functionally, component of the Rcs signaling system, which controls transcription of numerous genes. RcsC functions as a membrane-associated protein kinase that phosphorylates RcsD in response to environmental signals. The phosphoryl group is then transferred to the response regulator RcsB. The sequence is that of Sensor histidine kinase RcsC from Salmonella typhimurium (strain LT2 / SGSC1412 / ATCC 700720).